A 218-amino-acid polypeptide reads, in one-letter code: Uracil-DNA glycosylase (218 aa).

The active-site Proton acceptor is D59.

This sequence belongs to the uracil-DNA glycosylase (UDG) superfamily. UNG family.

It localises to the cytoplasm. It catalyses the reaction Hydrolyzes single-stranded DNA or mismatched double-stranded DNA and polynucleotides, releasing free uracil.. Its function is as follows. Excises uracil residues from the DNA which can arise as a result of misincorporation of dUMP residues by DNA polymerase or due to deamination of cytosine. The sequence is that of Uracil-DNA glycosylase from Staphylococcus aureus (strain bovine RF122 / ET3-1).